A 238-amino-acid polypeptide reads, in one-letter code: Ribonuclease PH (238 aa).

Phosphate-binding positions include Arg86 and 124–126 (GTR).

This sequence belongs to the RNase PH family. Homohexameric ring arranged as a trimer of dimers.

It carries out the reaction tRNA(n+1) + phosphate = tRNA(n) + a ribonucleoside 5'-diphosphate. Its function is as follows. Phosphorolytic 3'-5' exoribonuclease that plays an important role in tRNA 3'-end maturation. Removes nucleotide residues following the 3'-CCA terminus of tRNAs; can also add nucleotides to the ends of RNA molecules by using nucleoside diphosphates as substrates, but this may not be physiologically important. Probably plays a role in initiation of 16S rRNA degradation (leading to ribosome degradation) during starvation. The sequence is that of Ribonuclease PH from Psychrobacter arcticus (strain DSM 17307 / VKM B-2377 / 273-4).